The chain runs to 131 residues: MINDIISDSLTRIRNAGMRKLETTKLLHSKVVEALVGIFQAKGYIESFNVIEEDKKKFINVVLKYDEKGKSVINELKRISKPGRRVYKGKDEIKRFKNGYGTIVVSTSHGVLANDEAYKAGVGGEILCTIW.

The protein belongs to the universal ribosomal protein uS8 family. Part of the 30S ribosomal subunit. Contacts proteins S5 and S12.

Its function is as follows. One of the primary rRNA binding proteins, it binds directly to 16S rRNA central domain where it helps coordinate assembly of the platform of the 30S subunit. The polypeptide is Small ribosomal subunit protein uS8 (Campylobacter jejuni subsp. jejuni serotype O:23/36 (strain 81-176)).